We begin with the raw amino-acid sequence, 122 residues long: Large ribosomal subunit protein uL14 (122 aa).

The protein belongs to the universal ribosomal protein uL14 family. As to quaternary structure, part of the 50S ribosomal subunit. Forms a cluster with proteins L3 and L19. In the 70S ribosome, L14 and L19 interact and together make contacts with the 16S rRNA in bridges B5 and B8.

Functionally, binds to 23S rRNA. Forms part of two intersubunit bridges in the 70S ribosome. The chain is Large ribosomal subunit protein uL14 from Streptomyces griseus subsp. griseus (strain JCM 4626 / CBS 651.72 / NBRC 13350 / KCC S-0626 / ISP 5235).